The chain runs to 318 residues: L-lactate dehydrogenase (318 aa).

NAD(+) contacts are provided by Val16, Asp37, and Tyr69. Residues Gln86, Arg92, and 124 to 127 (NPVD) contribute to the substrate site. NAD(+) contacts are provided by residues 122–124 (ASN) and Ser147. 152–155 (DSAR) contributes to the substrate binding site. His179 serves as the catalytic Proton acceptor. Tyr223 is modified (phosphotyrosine). Thr232 lines the substrate pocket.

This sequence belongs to the LDH/MDH superfamily. LDH family. Homotetramer.

Its subcellular location is the cytoplasm. The catalysed reaction is (S)-lactate + NAD(+) = pyruvate + NADH + H(+). It functions in the pathway fermentation; pyruvate fermentation to lactate; (S)-lactate from pyruvate: step 1/1. Functionally, catalyzes the conversion of lactate to pyruvate. In Mycoplasma mycoides subsp. mycoides SC (strain CCUG 32753 / NCTC 10114 / PG1), this protein is L-lactate dehydrogenase.